The following is a 351-amino-acid chain: Protein FAM118B (351 aa).

N-acetylalanine is present on alanine 2. Phosphoserine is present on serine 9.

This sequence belongs to the FAM118 family.

It is found in the nucleus. It localises to the cajal body. May play a role in Cajal bodies formation. The chain is Protein FAM118B (FAM118B) from Homo sapiens (Human).